The primary structure comprises 195 residues: Nucleoid occlusion factor SlmA (195 aa).

The region spanning 6 to 66 (PSRRESILQA…ALIEFAEEAV (61 aa)) is the HTH tetR-type domain. The segment at residues 29-48 (TTAGLAKTVGVTEAALYRHF) is a DNA-binding region (H-T-H motif). Residues 118 to 138 (RKRASQFFERLETQIRQALKE) adopt a coiled-coil conformation.

This sequence belongs to the nucleoid occlusion factor SlmA family. In terms of assembly, homodimer. Interacts with FtsZ.

The protein localises to the cytoplasm. It is found in the nucleoid. Functionally, required for nucleoid occlusion (NO) phenomenon, which prevents Z-ring formation and cell division over the nucleoid. Acts as a DNA-associated cell division inhibitor that binds simultaneously chromosomal DNA and FtsZ, and disrupts the assembly of FtsZ polymers. SlmA-DNA-binding sequences (SBS) are dispersed on non-Ter regions of the chromosome, preventing FtsZ polymerization at these regions. The chain is Nucleoid occlusion factor SlmA from Marinobacter nauticus (strain ATCC 700491 / DSM 11845 / VT8) (Marinobacter aquaeolei).